A 122-amino-acid polypeptide reads, in one-letter code: Ribosome-binding factor A (122 aa).

Belongs to the RbfA family. As to quaternary structure, monomer. Binds 30S ribosomal subunits, but not 50S ribosomal subunits or 70S ribosomes.

Its subcellular location is the cytoplasm. Its function is as follows. One of several proteins that assist in the late maturation steps of the functional core of the 30S ribosomal subunit. Associates with free 30S ribosomal subunits (but not with 30S subunits that are part of 70S ribosomes or polysomes). Required for efficient processing of 16S rRNA. May interact with the 5'-terminal helix region of 16S rRNA. The chain is Ribosome-binding factor A from Opitutus terrae (strain DSM 11246 / JCM 15787 / PB90-1).